Here is a 115-residue protein sequence, read N- to C-terminus: Large ribosomal subunit protein uL22 (115 aa).

Belongs to the universal ribosomal protein uL22 family. As to quaternary structure, part of the 50S ribosomal subunit.

In terms of biological role, this protein binds specifically to 23S rRNA; its binding is stimulated by other ribosomal proteins, e.g. L4, L17, and L20. It is important during the early stages of 50S assembly. It makes multiple contacts with different domains of the 23S rRNA in the assembled 50S subunit and ribosome. Functionally, the globular domain of the protein is located near the polypeptide exit tunnel on the outside of the subunit, while an extended beta-hairpin is found that lines the wall of the exit tunnel in the center of the 70S ribosome. The chain is Large ribosomal subunit protein uL22 from Thioalkalivibrio sulfidiphilus (strain HL-EbGR7).